Reading from the N-terminus, the 297-residue chain is 4-diphosphocytidyl-2-C-methyl-D-erythritol kinase (297 aa).

Catalysis depends on residues Lys6 and Asp144.

Belongs to the GHMP kinase family. IspE subfamily.

It catalyses the reaction 4-CDP-2-C-methyl-D-erythritol + ATP = 4-CDP-2-C-methyl-D-erythritol 2-phosphate + ADP + H(+). It participates in isoprenoid biosynthesis; isopentenyl diphosphate biosynthesis via DXP pathway; isopentenyl diphosphate from 1-deoxy-D-xylulose 5-phosphate: step 3/6. Functionally, catalyzes the phosphorylation of the position 2 hydroxy group of 4-diphosphocytidyl-2C-methyl-D-erythritol. The chain is 4-diphosphocytidyl-2-C-methyl-D-erythritol kinase from Leptospira interrogans serogroup Icterohaemorrhagiae serovar Lai (strain 56601).